Reading from the N-terminus, the 169-residue chain is FAM231A/C-like protein LOC102723383 (169 aa).

The segment at 82–140 is disordered; sequence LIRSGSSQNESQEDQGAGLISQAGLKADNRRESSTWANEVEDRRPQCTPALNLTPSHPH.

This sequence belongs to the FAM231 family.

This chain is FAM231A/C-like protein LOC102723383, found in Homo sapiens (Human).